An 886-amino-acid chain; its full sequence is Alanine--tRNA ligase (886 aa).

4 residues coordinate Zn(2+): histidine 564, histidine 568, cysteine 666, and histidine 670.

This sequence belongs to the class-II aminoacyl-tRNA synthetase family. Zn(2+) serves as cofactor.

The protein localises to the cytoplasm. It carries out the reaction tRNA(Ala) + L-alanine + ATP = L-alanyl-tRNA(Ala) + AMP + diphosphate. In terms of biological role, catalyzes the attachment of alanine to tRNA(Ala) in a two-step reaction: alanine is first activated by ATP to form Ala-AMP and then transferred to the acceptor end of tRNA(Ala). Also edits incorrectly charged Ser-tRNA(Ala) and Gly-tRNA(Ala) via its editing domain. The protein is Alanine--tRNA ligase of Prochlorococcus marinus (strain MIT 9301).